The chain runs to 247 residues: tRNA uridine(34) hydroxylase (247 aa).

Residues 124–218 (TKQNVIVIDT…YLEDTHNKNN (95 aa)) form the Rhodanese domain. Catalysis depends on C178, which acts as the Cysteine persulfide intermediate.

It belongs to the TrhO family.

The enzyme catalyses uridine(34) in tRNA + AH2 + O2 = 5-hydroxyuridine(34) in tRNA + A + H2O. Functionally, catalyzes oxygen-dependent 5-hydroxyuridine (ho5U) modification at position 34 in tRNAs. The protein is tRNA uridine(34) hydroxylase of Rickettsia typhi (strain ATCC VR-144 / Wilmington).